The primary structure comprises 1130 residues: Sterol regulatory element-binding protein 2 (1130 aa).

A transcriptional activation (acidic) region spans residues 1–50 (MDESSELGVLETMETLTELGDELTLGDIDEMLQFVSNQVGEFPDLFSEQL). At 1–470 (MDESSELGVL…VALGMVDRSR (470 aa)) the chain is on the cytoplasmic side. Residues 53–133 (SFPGGGSNGG…PQPQPQPPAQ (81 aa)) are disordered. Over residues 55 to 64 (PGGGSNGGSG) the composition is skewed to gly residues. The span at 83–93 (RSFSQVPLSTF) shows a compositional bias: polar residues. Positions 94-104 (SPSAASPQAPA) are enriched in low complexity. Over residues 111–131 (PTPPRATPVLQPRPQPQPQPP) the composition is skewed to pro residues. Positions 226 to 480 (QQVPVLVQPQ…ILLCVLTFLG (255 aa)) are interaction with LMNA. A bHLH domain is found at 319–369 (ERRTTHNIIEKRYRSSINDKIIELKDLVMGTDAKMHKSGVLRKAIDYIKYL). Residues 369-390 (LQQVNHKLRQENMVLKLANQKN) are leucine-zipper. Lys-453 participates in a covalent cross-link: Glycyl lysine isopeptide (Lys-Gly) (interchain with G-Cter in SUMO2). A helical transmembrane segment spans residues 471–491 (ILLCVLTFLGLSFNPLTSLLQ). The Lumenal portion of the chain corresponds to 492–522 (WGGAHNTDQHPYSGSGRSVLSLESGAGGWFD). The chain crosses the membrane as a helical span at residues 523–543 (WMVPTLLLWLVNGVIVLSVFV). Residues 544-1130 (KLLVHGEPVI…LGGGTAIAAS (587 aa)) lie on the Cytoplasmic side of the membrane. The residue at position 1087 (Ser-1087) is a Phosphoserine.

It belongs to the SREBP family. Forms a tight complex with SCAP, the SCAP-SREBP complex, in the endoplasmic reticulum membrane and the Golgi apparatus. Interacts with PAQR3; the interaction anchors the SCAP-SREBP complex to the Golgi apparatus in low cholesterol conditions. Interacts (via C-terminal domain) with RNF139. In terms of assembly, homodimer; efficient DNA binding of the soluble transcription factor fragment requires dimerization with another bHLH protein. Interacts with LMNA. Processed in the Golgi apparatus, releasing the protein from the membrane. At low cholesterol the SCAP-SREBP complex is recruited into COPII vesicles for export from the endoplasmic reticulum. In the Golgi, complex SREBPs are cleaved sequentially by site-1 (MBTPS1, S1P) and site-2 (MBTPS2, S2P) proteases. The first cleavage by site-1 protease occurs within the luminal loop, the second cleavage by site-2 protease occurs within the first transmembrane domain, releasing the transcription factor from the Golgi membrane. Apoptosis triggers cleavage by the cysteine proteases caspase-3 and caspase-7. Cleavage and activation is induced by mediated cholesterol efflux. Post-translationally, phosphorylated by AMPK, leading to suppress protein processing and nuclear translocation, and repress target gene expression. In terms of processing, SCAP-free SREBF2 is ubiquitinated by the BCR(ARMC5) complex, leading to its degradation. Ubiquitinated; the nuclear form has a rapid turnover and is rapidly ubiquitinated and degraded by the proteasome in the nucleus.

Its subcellular location is the endoplasmic reticulum membrane. The protein resides in the golgi apparatus membrane. The protein localises to the cytoplasmic vesicle. It localises to the COPII-coated vesicle membrane. It is found in the nucleus. Its activity is regulated as follows. Activation by cleavage is down-regulated upon activation of SIRT3-dependent PRKAA1/AMPK-alpha signaling cascade which leads to inhibition of ATP-consuming lipogenesis to restore cellular energy balance. Precursor of the transcription factor form (Processed sterol regulatory element-binding protein 2), which is embedded in the endoplasmic reticulum membrane. Low sterol concentrations promote processing of this form, releasing the transcription factor form that translocates into the nucleus and activates transcription of genes involved in cholesterol biosynthesis. In terms of biological role, key transcription factor that regulates expression of genes involved in cholesterol biosynthesis. Binds to the sterol regulatory element 1 (SRE-1) (5'-ATCACCCCAC-3'). Has dual sequence specificity binding to both an E-box motif (5'-ATCACGTGA-3') and to SRE-1 (5'-ATCACCCCAC-3'). Regulates transcription of genes related to cholesterol synthesis pathway. The chain is Sterol regulatory element-binding protein 2 from Mus musculus (Mouse).